The chain runs to 337 residues: 2-oxoglutarate receptor 1 (337 aa).

Residues 1 to 37 (MIETLDSPANDSDFLDYITALENCTDEQISFKMQYLP) lie on the Extracellular side of the membrane. Asn-23 carries N-linked (GlcNAc...) asparagine glycosylation. Residues 38–58 (VIYSIIFLVGFPGNTVAISIY) traverse the membrane as a helical segment. The Cytoplasmic portion of the chain corresponds to 59–69 (VFKMRPWKSST). Residues 70-90 (IIMLNLALTDLLYLTSLPFLI) traverse the membrane as a helical segment. The Extracellular segment spans residues 91–116 (HYYASGENWIFGDFMCKFIRFGFHFN). Cysteines 106 and 183 form a disulfide. Residues 117-137 (LYSSILFLTCFSLFRYIVIIH) traverse the membrane as a helical segment. Residues 138–151 (PMSCFSIQKTRWAV) lie on the Cytoplasmic side of the membrane. The chain crosses the membrane as a helical span at residues 152-172 (VACAGVWVISLVAVMPMTFLI). Over 173–200 (TSTTRTNRSACLDLTSSDDLTTIKWYNL) the chain is Extracellular. The chain crosses the membrane as a helical span at residues 201 to 221 (ILTATTFCLPLLIVTLCYTTI). Residues 222–242 (ISTLTHGPRTHSCFKQKARRL) lie on the Cytoplasmic side of the membrane. Residues 243-263 (TILLLLVFYVCFLPFHILRVI) traverse the membrane as a helical segment. Residues 264 to 284 (RIESRLLSISCSIESHIHEAY) lie on the Extracellular side of the membrane. A helical transmembrane segment spans residues 285–305 (IVSRPLAALNTFGNLLLYVVV). Residues 306 to 337 (SNNFQQAFCSAVRCKAIGDLEQAKKDSCSNNP) lie on the Cytoplasmic side of the membrane.

It belongs to the G-protein coupled receptor 1 family. In terms of tissue distribution, highly expressed in mast cells and is found predominantly in the tissues of the respiratory tract and kidneys.

Its subcellular location is the cell membrane. In terms of biological role, g protein-coupled receptor for dicarboxylates and amino dicarboxylates. Receptor for itaconate, a metabolite produced by myeloid lineages. In the respiratory epithelium, couples the binding of itaconate to the activation of GNA11 and downstream intracellular Ca(2+) release, leading to mucocilliary clearance of airborne pathogens. Receptor for leukotriene E4 (LTE4) produced by mast cells upon allergic inflammation. Binds with high affinity to LTE4 and elicits mucin release from pulmonary epithelium in response to airborne fungi allergens. Regulates mucin-producing goblet cell homeostasis. Receptor for alpha-ketoglutarate produced by proximal tubule renal cells upon metabolic alkalosis. In an intrarenal paracrine signaling pathway, binds alpha-ketoglutarate and drives transepithelial salt reabsorption and bicarbonate secretion by SLC26A4/pendrin-positive intercalated cells. The chain is 2-oxoglutarate receptor 1 (Oxgr1) from Rattus norvegicus (Rat).